Reading from the N-terminus, the 446-residue chain is GTPase Der (446 aa).

2 EngA-type G domains span residues 2–166 (TVVA…PEAP) and 179–354 (IRVS…RQYN). Residues 8-15 (GRPNVGKS), 55-59 (DTAGF), 118-121 (NKID), 185-192 (GRPNVGKS), 232-236 (DTAGI), and 297-300 (NKWD) each bind GTP. One can recognise a KH-like domain in the interval 355-440 (QRVTTGIVNR…PIRLIFRPRQ (86 aa)).

It belongs to the TRAFAC class TrmE-Era-EngA-EngB-Septin-like GTPase superfamily. EngA (Der) GTPase family. As to quaternary structure, associates with the 50S ribosomal subunit.

Its function is as follows. GTPase that plays an essential role in the late steps of ribosome biogenesis. The sequence is that of GTPase Der from Syntrophobacter fumaroxidans (strain DSM 10017 / MPOB).